Consider the following 56-residue polypeptide: Large ribosomal subunit protein bL33c (56 aa).

This sequence belongs to the bacterial ribosomal protein bL33 family.

Its subcellular location is the plastid. The protein localises to the chloroplast. This chain is Large ribosomal subunit protein bL33c, found in Rhodomonas salina (Cryptomonas salina).